An 82-amino-acid polypeptide reads, in one-letter code: Small ribosomal subunit protein bS16 (82 aa).

Belongs to the bacterial ribosomal protein bS16 family.

The polypeptide is Small ribosomal subunit protein bS16 (Salmonella agona (strain SL483)).